A 3371-amino-acid chain; its full sequence is Abnormal spindle-like microcephaly-associated protein homolog (3371 aa).

A phosphoserine mark is found at serine 212, serine 215, serine 300, serine 325, and serine 540. A disordered region spans residues 536-559 (RPHFSPVESKTSTVKHTKKVVTSS). In terms of domain architecture, Calponin-homology (CH) 1 spans 852–988 (KASKEILLAF…LLWKIALAFQ (137 aa)). The stretch at 989-1014 (VDISLNLDQLKEEIDFLKNTQSMKKT) forms a coiled coil. At serine 1035 the chain carries Phosphoserine. A Calponin-homology (CH) 2 domain is found at 1042–1193 (SESVKLLMDW…YLSFLCARLL (152 aa)). IQ domains lie at 1198–1227 (ETRA…RDKA), 1396–1427 (EERA…IIIQ), 1469–1500 (KRAA…VLQS), 1564–1593 (TRSA…SIVK), 1587–1616 (ILTS…ATVK), 1610–1639 (LKKA…IAQQ), 1644–1673 (RRAS…AAVS), 1667–1698 (QRKA…VVIQ), 1717–1746 (VRRA…AALK), 1740–1769 (QSAA…SALK), 1790–1819 (TRTA…AAVK), 1813–1844 (EHEA…SVIQ), 1863–1894 (LRRA…IIIQ), 1886–1917 (QQRC…HLIQ), 1936–1965 (TKXA…AAAT), 1959–1990 (MHQA…VIIQ), 2009–2040 (VKKA…TLIK), 2032–2063 (MHMA…IIIQ), 2082–2113 (ILKA…TLIQ), 2105–2134 (MRTA…VTKT), 2155–2186 (LRRS…AVIQ), 2227–2258 (LQKA…TVLQ), 2250–2281 (MRRA…QVIQ), 2300–2331 (QRHS…TLIQ), 2323–2354 (MHAS…VFVQ), 2396–2427 (MHRA…VLIQ), 2446–2477 (WRHS…VIIQ), 2539–2570 (RHQA…VFVQ), 2580–2609 (RTQA…AATR), 2603–2634 (MHLA…VVIQ), 2653–2682 (IQKS…KKMA), 2729–2760 (QRKA…RIQS), 2751–2780 (QRRA…AALT), 2824–2853 (IRSS…STIK), 2847–2878 (LKDS…RIQA), 2869–2900 (EVKA…RIIQ), 2944–2973 (RHQA…AALT), 2994–3025 (LKKS…RLLH), 3096–3125 (HSRA…RIAK), and 3119–3150 (FNKR…IRQR).

The protein localises to the cytoplasm. It is found in the cytoskeleton. The protein resides in the spindle. Its subcellular location is the nucleus. Probable role in mitotic spindle regulation and coordination of mitotic processes. May have a preferential role in regulating neurogenesis. The sequence is that of Abnormal spindle-like microcephaly-associated protein homolog (ASPM) from Bos taurus (Bovine).